The sequence spans 132 residues: Large-conductance mechanosensitive channel (132 aa).

A run of 2 helical transmembrane segments spans residues 14 to 34 (VIDL…VSSL) and 67 to 87 (GNFI…FMFV).

This sequence belongs to the MscL family. As to quaternary structure, homopentamer.

It localises to the cell membrane. Functionally, channel that opens in response to stretch forces in the membrane lipid bilayer. May participate in the regulation of osmotic pressure changes within the cell. In Bacillus anthracis (strain A0248), this protein is Large-conductance mechanosensitive channel.